Reading from the N-terminus, the 329-residue chain is Malate dehydrogenase (329 aa).

13–19 (GAAGNIS) serves as a coordination point for NAD(+). Residues Arg-94 and Arg-100 each contribute to the substrate site. NAD(+) is bound by residues Asn-107, Gln-114, and 131 to 133 (VGN). Substrate contacts are provided by Asn-133 and Arg-164. Residue His-189 is the Proton acceptor of the active site.

Belongs to the LDH/MDH superfamily. MDH type 2 family.

It catalyses the reaction (S)-malate + NAD(+) = oxaloacetate + NADH + H(+). Catalyzes the reversible oxidation of malate to oxaloacetate. This Psychrobacter cryohalolentis (strain ATCC BAA-1226 / DSM 17306 / VKM B-2378 / K5) protein is Malate dehydrogenase.